We begin with the raw amino-acid sequence, 247 residues long: MSRKFCVGGNWKMNGDQKSIAEIAKTLSSAALDPNTEVVIGCPAIYLMYARNLLPCELGLAGQNAYKVAKGAFTGEISPAMLKDIGADWVILGHSERRAIFGESDALIAEKAEHALAEGLKVIACIGETLEEREAGKTNEVVARQMCAYAQKIKDWKNVVVAYEPVWAIGTGKTATPDQAQEVHAFLRQWLSDNISKEVSASLRIQYGGSVTAANAKELAKKPDIDGFLVGGASLKPEFVDIINARQ.

Residues Asn-10 and Lys-12 each contribute to the substrate site. Catalysis depends on His-94, which acts as the Electrophile. The active-site Proton acceptor is Glu-164.

It belongs to the triosephosphate isomerase family. In terms of assembly, homodimer.

It carries out the reaction D-glyceraldehyde 3-phosphate = dihydroxyacetone phosphate. The protein operates within carbohydrate biosynthesis; gluconeogenesis. Its pathway is carbohydrate degradation; glycolysis; D-glyceraldehyde 3-phosphate from glycerone phosphate: step 1/1. This Drosophila simulans (Fruit fly) protein is Triosephosphate isomerase (Tpi).